Reading from the N-terminus, the 285-residue chain is Diphthine methyl ester synthase (285 aa).

Residues L9, D84, G87, S112–I113, L163, V221, and H246 contribute to the S-adenosyl-L-methionine site.

It belongs to the diphthine synthase family.

The protein resides in the cytoplasm. The catalysed reaction is 2-[(3S)-amino-3-carboxypropyl]-L-histidyl-[translation elongation factor 2] + 4 S-adenosyl-L-methionine = diphthine methyl ester-[translation elongation factor 2] + 4 S-adenosyl-L-homocysteine + 3 H(+). Its pathway is protein modification; peptidyl-diphthamide biosynthesis. S-adenosyl-L-methionine-dependent methyltransferase that catalyzes four methylations of the modified target histidine residue in translation elongation factor 2 (EF-2), to form an intermediate called diphthine methyl ester. The four successive methylation reactions represent the second step of diphthamide biosynthesis. This Aspergillus fumigatus (strain ATCC MYA-4609 / CBS 101355 / FGSC A1100 / Af293) (Neosartorya fumigata) protein is Diphthine methyl ester synthase (dph5).